The following is a 137-amino-acid chain: Large ribosomal subunit protein uL16 (137 aa).

Belongs to the universal ribosomal protein uL16 family. As to quaternary structure, part of the 50S ribosomal subunit.

In terms of biological role, binds 23S rRNA and is also seen to make contacts with the A and possibly P site tRNAs. The sequence is that of Large ribosomal subunit protein uL16 from Azotobacter vinelandii (strain DJ / ATCC BAA-1303).